The following is a 548-amino-acid chain: CTL-like protein DDB_G0288717 (548 aa).

The segment at 1–44 is disordered; the sequence is MWAPEEDYKQPLLTNSRVANNGNNNNSNGRGGSSSPSTRLQPEH. N-linked (GlcNAc...) asparagine glycosylation occurs at Asn-25. Residues 52-72 form a helical membrane-spanning segment; sequence ILFTILFLLVIGGMAAISGIA. N-linked (GlcNAc...) asparagine glycosylation is present at Asn-97. The next 4 membrane-spanning stretches (helical) occupy residues 125–145, 151–171, 184–204, and 226–246; these read DILI…IQLL, FFIY…GGLF, MIVG…IVYL, and PSVF…IAYW. Asn-273 carries an N-linked (GlcNAc...) asparagine glycan. 2 helical membrane-spanning segments follow: residues 290–310 and 350–370; these read NLMY…SAVF and FGSL…AFML. An N-linked (GlcNAc...) asparagine glycan is attached at Asn-377. Helical transmembrane passes span 381-401, 442-462, and 479-499; these read KLVV…ESIV, FIGG…SALF, and IALS…IVGI. The N-linked (GlcNAc...) asparagine glycan is linked to Asn-544.

Belongs to the CTL (choline transporter-like) family.

It is found in the membrane. The sequence is that of CTL-like protein DDB_G0288717 from Dictyostelium discoideum (Social amoeba).